Reading from the N-terminus, the 386-residue chain is NADH kinase pos5, mitochondrial (386 aa).

A mitochondrion-targeting transit peptide spans 1 to 42; it reads MIRAANGFRISVRNTAVCLAPNFRQLKGFSIINLGSLQYFRY.

It belongs to the NAD kinase family.

It localises to the mitochondrion. The catalysed reaction is NADH + ATP = ADP + NADPH + H(+). Functionally, phosphorylates both NADH and NAD(+), with a preference for NADH. Anti-oxidant factor and key source of the cellular reductant NADPH. In Schizosaccharomyces pombe (strain 972 / ATCC 24843) (Fission yeast), this protein is NADH kinase pos5, mitochondrial (pos5).